Here is a 296-residue protein sequence, read N- to C-terminus: MQDRFVHCIAQLPQPLADQLVPLLNQDFVGHMDAQQVADLAAATQMSQDELLLALLPIAAALAKPPISEFYVGAIAKGASGDIYMGANLELDGEALFHSVHAEQSAISHAWLSGETGIEDIIVNASPCGHCRQFMNELVEGQAIRIHLPEQATQPLSHYLPYAFGPADLNIKTPLLSKQQHEFTLESADPMIIEALDHLSLSYAPYSESYAAVVLETRDGATFCGRYAENAAFNPSMLPMQMALSAMARHNRDFSEINRAVLIESSQGKISLVGATMDALHAVAAVELEHIMVDPV.

2 consecutive CMP/dCMP-type deaminase domains span residues 47–167 and 186–296; these read SQDE…FGPA and ESAD…VDPV. 88-90 provides a ligand contact to substrate; it reads NLE. A Zn(2+)-binding site is contributed by histidine 101. Glutamate 103 acts as the Proton donor in catalysis. Residues cysteine 128 and cysteine 131 each coordinate Zn(2+).

It belongs to the cytidine and deoxycytidylate deaminase family. In terms of assembly, homodimer. The cofactor is Zn(2+).

The enzyme catalyses cytidine + H2O + H(+) = uridine + NH4(+). It catalyses the reaction 2'-deoxycytidine + H2O + H(+) = 2'-deoxyuridine + NH4(+). In terms of biological role, this enzyme scavenges exogenous and endogenous cytidine and 2'-deoxycytidine for UMP synthesis. The sequence is that of Cytidine deaminase from Shewanella loihica (strain ATCC BAA-1088 / PV-4).